The chain runs to 110 residues: UPF0060 membrane protein AHA_2410 (110 aa).

Transmembrane regions (helical) follow at residues 8 to 28, 33 to 53, 63 to 83, and 87 to 107; these read GLFLVTALAEILGCYLPYLWL, SVWLLLPAGLSLMLFAWLLSL, AAYGGVYIFVAILWLWLVDGI, and LWDLVGSLVALCGMAIIMFAP.

The protein belongs to the UPF0060 family.

The protein resides in the cell inner membrane. This is UPF0060 membrane protein AHA_2410 from Aeromonas hydrophila subsp. hydrophila (strain ATCC 7966 / DSM 30187 / BCRC 13018 / CCUG 14551 / JCM 1027 / KCTC 2358 / NCIMB 9240 / NCTC 8049).